The chain runs to 630 residues: Cytochrome B pre-mRNA-processing protein 2 (630 aa).

The protein resides in the mitochondrion. Appears to be specifically required for the splicing of the terminal intron (bI5) of the cytochrome b pre-mRNA. Can also stimulates the splicing of the omega intron of the precursor of large ribosomal RNA. In Saccharomyces cerevisiae (strain ATCC 204508 / S288c) (Baker's yeast), this protein is Cytochrome B pre-mRNA-processing protein 2 (CBP2).